Consider the following 608-residue polypeptide: Tyrosyl-DNA phosphodiesterase 1 (608 aa).

Residues 1 to 101 (MSQEGDYGRW…SDDELQPEMP (101 aa)) are disordered. S61 carries the post-translational modification Phosphoserine. A Phosphothreonine modification is found at T147. The residue at position 148 (S148) is a Phosphoserine. H263 acts as the Nucleophile in catalysis. K265 is a substrate binding site. An interaction with DNA region spans residues 400–403 (SVGS). Residue H493 is the Proton donor/acceptor of the active site. A substrate-binding site is contributed by K495.

Belongs to the tyrosyl-DNA phosphodiesterase family. As to quaternary structure, monomer. Post-translationally, phosphorylated on serine and/or threonine residues, but not on tyrosine residues. Ubiquitously expressed. Similar expression throughout the central nervous system (whole brain, amygdala, caudate nucleus, cerebellum, cerebral cortex, frontal lobe, hippocampus, medulla oblongata, occipital lobe, putamen, substantia nigra, temporal lobe, thalamus, nucleus accumbens and spinal cord) and increased expression in testis and thymus.

The protein localises to the nucleus. It is found in the cytoplasm. In terms of biological role, DNA repair enzyme that can remove a variety of covalent adducts from DNA through hydrolysis of a 3'-phosphodiester bond, giving rise to DNA with a free 3' phosphate. Catalyzes the hydrolysis of dead-end complexes between DNA and the topoisomerase I active site tyrosine residue. Hydrolyzes 3'-phosphoglycolates on protruding 3' ends on DNA double-strand breaks due to DNA damage by radiation and free radicals. Acts on blunt-ended double-strand DNA breaks and on single-stranded DNA. Has low 3'exonuclease activity and can remove a single nucleoside from the 3'end of DNA and RNA molecules with 3'hydroxyl groups. Has no exonuclease activity towards DNA or RNA with a 3'phosphate. In Homo sapiens (Human), this protein is Tyrosyl-DNA phosphodiesterase 1 (TDP1).